A 138-amino-acid chain; its full sequence is Large ribosomal subunit protein uL16 (138 aa).

This sequence belongs to the universal ribosomal protein uL16 family. In terms of assembly, part of the 50S ribosomal subunit.

Binds 23S rRNA and is also seen to make contacts with the A and possibly P site tRNAs. This Anaeromyxobacter sp. (strain Fw109-5) protein is Large ribosomal subunit protein uL16.